A 444-amino-acid polypeptide reads, in one-letter code: Homogentisate 1,2-dioxygenase (444 aa).

His-298 acts as the Proton acceptor in catalysis. Fe cation is bound by residues His-341 and Glu-347. Positions 356 and 377 each coordinate homogentisate. Fe cation is bound at residue His-377.

It belongs to the homogentisate dioxygenase family. Hexamer; dimer of trimers. Requires Fe cation as cofactor.

The enzyme catalyses homogentisate + O2 = 4-maleylacetoacetate + H(+). Its pathway is amino-acid degradation; L-phenylalanine degradation; acetoacetate and fumarate from L-phenylalanine: step 4/6. Involved in the catabolism of homogentisate (2,5-dihydroxyphenylacetate or 2,5-OH-PhAc), a central intermediate in the degradation of phenylalanine and tyrosine. Catalyzes the oxidative ring cleavage of the aromatic ring of homogentisate to yield maleylacetoacetate. The chain is Homogentisate 1,2-dioxygenase from Burkholderia orbicola (strain AU 1054).